The chain runs to 575 residues: Carboxylesterase 5A (575 aa).

An N-terminal signal peptide occupies residues 1 to 20 (MSGNWVHPGQILIWAIWVLA). Cysteine 94 and cysteine 121 form a disulfide bridge. Serine 226 acts as the Acyl-ester intermediate in catalysis. Asparagine 281 is a glycosylation site (N-linked (GlcNAc...) asparagine). Glutamate 345 acts as the Charge relay system in catalysis. Residue asparagine 363 is glycosylated (N-linked (GlcNAc...) asparagine). The active-site Charge relay system is histidine 454. N-linked (GlcNAc...) asparagine glycans are attached at residues asparagine 513 and asparagine 524.

The protein belongs to the type-B carboxylesterase/lipase family. Post-translationally, N-glycosylated.

Its subcellular location is the secreted. It carries out the reaction a carboxylic ester + H2O = an alcohol + a carboxylate + H(+). Functionally, involved in the detoxification of xenobiotics and in the activation of ester and amide prodrugs. This Homo sapiens (Human) protein is Carboxylesterase 5A (CES5A).